The sequence spans 423 residues: Galactosylceramide sulfotransferase (423 aa).

At 1 to 14 (MLPPQKKPWESMAK) the chain is on the cytoplasmic side. A helical; Signal-anchor for type II membrane protein membrane pass occupies residues 15–35 (GLVLGALFTSFLLLVYSYAVP). Residues 36-423 (PLHAGLASTT…WKFIRDFLRW (388 aa)) are Lumenal-facing. 2 N-linked (GlcNAc...) asparagine glycosylation sites follow: N66 and N312.

This sequence belongs to the galactose-3-O-sulfotransferase family. As to expression, expressed in kidney proximal tubule, gastric mucosa and adenocarcinoma. Highly expressed in renal cell carcinoma cell lines.

It is found in the golgi apparatus membrane. It carries out the reaction a beta-D-galactosyl-(1&lt;-&gt;1')-N-acylsphing-4-enine + 3'-phosphoadenylyl sulfate = an N-acyl-1-beta-D-(3-O-sulfo)-galactosyl-sphing-4-enine + adenosine 3',5'-bisphosphate + H(+). It catalyses the reaction a 1-O-alkyl-2-acyl-3-O-(beta-D-galactosyl)-sn-glycerol + 3'-phosphoadenylyl sulfate = a 1-O-alkyl-2-acyl-3-(beta-D-3-sulfogalactosyl)-sn-glycerol + adenosine 3',5'-bisphosphate + H(+). The enzyme catalyses a beta-D-Gal-(1&lt;-&gt;1')-ceramide + 3'-phosphoadenylyl sulfate = 1-(3-O-sulfo-beta-D-galactosyl)-ceramide + adenosine 3',5'-bisphosphate + H(+). The catalysed reaction is a 1,2-diacyl-3-O-(beta-D-galactosyl)-sn-glycerol + 3'-phosphoadenylyl sulfate = 1,2-diacyl-3-(3-O-sulfo-beta-D-galactosyl)-sn-glycerol + adenosine 3',5'-bisphosphate + H(+). It carries out the reaction a beta-D-Gal-(1-&gt;4)-beta-D-Glc-(1&lt;-&gt;1)-Cer(d18:1(4E)) + 3'-phosphoadenylyl sulfate = beta-D-3-sulfogalactosyl-(1-&gt;4)-beta-D-glucosyl-(1&lt;-&gt;1')-N-acylsphing-4-enine + adenosine 3',5'-bisphosphate + H(+). It functions in the pathway lipid metabolism; sphingolipid metabolism. Functionally, catalyzes the transfer of a sulfate group to position 3 of non-reducing beta-galactosyl residues in glycerolipids and sphingolipids, therefore participates in the biosynthesis of sulfoglycolipids. Catalyzes the synthesis of galactosylceramide sulfate (sulfatide), a major lipid component of the myelin sheath and of monogalactosylalkylacylglycerol sulfate (seminolipid), present in spermatocytes. Seems to prefer beta-glycosides at the non-reducing termini of sugar chains attached to a lipid moiety. Also acts on lactosylceramide, galactosyl 1-alkyl-2-sn-glycerol and galactosyl diacylglycerol (in vitro). This is Galactosylceramide sulfotransferase from Homo sapiens (Human).